The sequence spans 282 residues: 2-dehydro-3-deoxyphosphooctonate aldolase (282 aa).

This sequence belongs to the KdsA family.

The protein localises to the cytoplasm. It carries out the reaction D-arabinose 5-phosphate + phosphoenolpyruvate + H2O = 3-deoxy-alpha-D-manno-2-octulosonate-8-phosphate + phosphate. It functions in the pathway carbohydrate biosynthesis; 3-deoxy-D-manno-octulosonate biosynthesis; 3-deoxy-D-manno-octulosonate from D-ribulose 5-phosphate: step 2/3. The protein operates within bacterial outer membrane biogenesis; lipopolysaccharide biosynthesis. The chain is 2-dehydro-3-deoxyphosphooctonate aldolase from Shewanella amazonensis (strain ATCC BAA-1098 / SB2B).